Here is a 394-residue protein sequence, read N- to C-terminus: Phosphoglycerate kinase (394 aa).

Substrate-binding positions include 21 to 23 (DFN), Arg36, 59 to 62 (HLGR), Arg118, and Arg151. Ser183 carries the phosphoserine modification. Lys201 lines the ATP pocket. Residue Thr299 is modified to Phosphothreonine. Residues Glu323 and 350–353 (GGDS) each bind ATP.

This sequence belongs to the phosphoglycerate kinase family. Monomer.

The protein localises to the cytoplasm. It catalyses the reaction (2R)-3-phosphoglycerate + ATP = (2R)-3-phospho-glyceroyl phosphate + ADP. Its pathway is carbohydrate degradation; glycolysis; pyruvate from D-glyceraldehyde 3-phosphate: step 2/5. This chain is Phosphoglycerate kinase, found in Bacillus pumilus (strain SAFR-032).